The primary structure comprises 88 residues: UPF0250 protein IL0958 (88 aa).

It belongs to the UPF0250 family.

This Idiomarina loihiensis (strain ATCC BAA-735 / DSM 15497 / L2-TR) protein is UPF0250 protein IL0958.